The following is a 151-amino-acid chain: Transcriptional regulator MraZ (151 aa).

2 consecutive SpoVT-AbrB domains span residues 5 to 51 and 81 to 124; these read AHEL…PVAE and AEIL…GREQ.

Belongs to the MraZ family. In terms of assembly, forms oligomers.

It is found in the cytoplasm. The protein localises to the nucleoid. This chain is Transcriptional regulator MraZ, found in Neisseria meningitidis serogroup C / serotype 2a (strain ATCC 700532 / DSM 15464 / FAM18).